The sequence spans 84 residues: Metallothionein type 2b (84 aa).

This sequence belongs to the metallothionein superfamily. Type 15 family. In terms of tissue distribution, expressed in leaves, stems and roots.

The protein localises to the cytoplasm. It is found in the nucleus. In terms of biological role, metallothioneins have a high content of cysteine residues that bind various heavy metals. Probably involved in maintaining homeostasis of essential transition metals and detoxification of toxic metals. Increases cadmium and zinc tolerance when expressed in heterologous systems. Metal chelator binding 6 cadmium or 5 zinc atoms per protein. This is Metallothionein type 2b from Colocasia esculenta (Wild taro).